The primary structure comprises 505 residues: Glutamate--tRNA ligase (505 aa).

Positions 11–21 (PSPTGPLHIGG) match the 'HIGH' region motif. The short motif at 260–264 (KLSKR) is the 'KMSKS' region element. Lysine 263 lines the ATP pocket.

This sequence belongs to the class-I aminoacyl-tRNA synthetase family. Glutamate--tRNA ligase type 1 subfamily. As to quaternary structure, monomer.

The protein resides in the cytoplasm. It carries out the reaction tRNA(Glu) + L-glutamate + ATP = L-glutamyl-tRNA(Glu) + AMP + diphosphate. Functionally, catalyzes the attachment of glutamate to tRNA(Glu) in a two-step reaction: glutamate is first activated by ATP to form Glu-AMP and then transferred to the acceptor end of tRNA(Glu). This Christiangramia forsetii (strain DSM 17595 / CGMCC 1.15422 / KT0803) (Gramella forsetii) protein is Glutamate--tRNA ligase.